Reading from the N-terminus, the 243-residue chain is Venom nerve growth factor 1 (243 aa).

Positions 1-18 are cleaved as a signal peptide; it reads MSMLCYTLIIAFLIGIWA. Residues 19-125 constitute a propeptide that is removed on maturation; it reads VPKSEDNAPL…ALNRNIRAKR (107 aa). Intrachain disulfides connect cysteine 139/cysteine 204, cysteine 182/cysteine 232, and cysteine 192/cysteine 234. A glycan (N-linked (GlcNAc...) asparagine) is linked at asparagine 148.

Belongs to the NGF-beta family. As to quaternary structure, homodimer; non-covalently linked. In terms of tissue distribution, expressed by the venom gland.

It localises to the secreted. Its function is as follows. Nerve growth factor is important for the development and maintenance of the sympathetic and sensory nervous systems. It stimulates division and differentiation of sympathetic and embryonic sensory neurons as well as basal forebrain cholinergic neurons in the brain. Its relevance in the snake venom is not clear. However, it has been shown to inhibit metalloproteinase-dependent proteolysis of platelet glycoprotein Ib alpha, suggesting a metalloproteinase inhibition to prevent metalloprotease autodigestion and/or protection against prey proteases. Binds a lipid between the two protein chains in the homodimer. The lipid-bound form promotes histamine relase from mouse mast cells, contrary to the lipid-free form. In Naja sputatrix (Malayan spitting cobra), this protein is Venom nerve growth factor 1.